A 330-amino-acid chain; its full sequence is Olfactory receptor 5P73 (330 aa).

Topologically, residues 1-28 are extracellular; it reads MAFLEDGNHTTVTEFFLLGLTDDPVLRD. An N-linked (GlcNAc...) asparagine glycan is attached at N8. A helical membrane pass occupies residues 29–49; the sequence is ILFIIILCIYLVTVSGNLSTI. At 50-57 the chain is on the cytoplasmic side; it reads LLIRVSSQ. A helical transmembrane segment spans residues 58–78; that stretch reads LHHPMYFILSHLASVDIGISS. The Extracellular segment spans residues 79 to 102; sequence SVTPNMLATFLVKQNTISYIGCSI. A disulfide bond links C100 and C192. The helical transmembrane segment at 103 to 123 threads the bilayer; sequence QFTSAAFFGTVECFLLATMAY. Residues 124–136 are Cytoplasmic-facing; that stretch reads DRFVAICNPLLYS. Residues 137-157 form a helical membrane-spanning segment; it reads TKMSTEACIQLVVGSYIQGFL. Over 158–199 the chain is Extracellular; it reads NASFFTLSFFSLFFCGPNRINDFYCDFAPLLELSCSDVTVAV. A helical transmembrane segment spans residues 200–220; the sequence is VITSISAGFITLTTVFVIAIS. The Cytoplasmic segment spans residues 221-240; it reads YSCIFITIMKMHSTESRCKA. The helical transmembrane segment at 241–261 threads the bilayer; that stretch reads FSTCTSHLTAVILFYGTAIFI. Residues 262 to 274 are Extracellular-facing; the sequence is YVMPKSSYSTDQN. Residues 275–295 form a helical membrane-spanning segment; sequence KVLSIFYTVVIPMLNPLIYSL. At 296 to 330 the chain is on the cytoplasmic side; the sequence is RNNEIKEALKRHLGKKVFSYGNLFCKTHYNHNYPV.

Belongs to the G-protein coupled receptor 1 family.

The protein localises to the cell membrane. Potential odorant receptor. This is Olfactory receptor 5P73 from Mus musculus (Mouse).